The sequence spans 59 residues: Sec-independent protein translocase protein TatA (59 aa).

A helical membrane pass occupies residues 1 to 21; that stretch reads MFSNIGFPGLILILVAVLILF.

Belongs to the TatA/E family. In terms of assembly, forms a complex with TatC.

The protein resides in the cell membrane. In terms of biological role, part of the twin-arginine translocation (Tat) system that transports large folded proteins containing a characteristic twin-arginine motif in their signal peptide across membranes. TatA could form the protein-conducting channel of the Tat system. In Bacillus mycoides (strain KBAB4) (Bacillus weihenstephanensis), this protein is Sec-independent protein translocase protein TatA.